An 817-amino-acid polypeptide reads, in one-letter code: Neurabin-2 (817 aa).

Actin-binding regions lie at residues Met1 to Ser154 and Glu164 to Val283. The segment at Met1–Ala165 is disordered. Phosphoserine is present on residues Ser15 and Ser17. Residues Gly44 to Lys58 show a composition bias toward basic residues. Phosphoserine occurs at positions 94, 100, and 116. Residues Ser100 to Ala371 are interaction with D(2) dopamine receptor. Over residues Ser131–Pro141 the composition is skewed to pro residues. Residues Arg169–Pro255 are interaction with ADRA2A, ADRA2B and ADRA2C. Position 192 is a phosphoserine (Ser192). Phosphothreonine is present on Thr193. Ser205 is subject to Phosphoserine. A Phosphothreonine modification is found at Thr207. Positions Glu216–Arg447 are disordered. The segment covering Gln252–Pro261 has biased composition (pro residues). Residues Lys291–Glu302 are compositionally biased toward basic and acidic residues. The span at Ser333–Ala342 shows a compositional bias: low complexity. Basic and acidic residues predominate over residues Glu344–Ala356. The segment covering Leu410 to Tyr425 has biased composition (acidic residues). The segment at Asp417–Leu494 is interaction with protein phosphatase 1. The residue at position 438 (Ser438) is a Phosphoserine. Positions Arg447–Phe451 match the PP1-binding motif motif. An interaction with RGS2 region spans residues Ser480–Gly525. A PDZ domain is found at Pro496–Arg584. The tract at residues Ile595–Ser816 is interaction with TGN38. At Ser658 the chain carries Phosphoserine. A coiled-coil region spans residues Phe671–Leu788.

In terms of assembly, interacts with DCLK2. Possibly exists as a homodimer, homotrimer or a homotetramer. Interacts with F-actin, PPP1CA, neurabin-1, TGN38 and D(2) dopamine receptor. Interacts with RGS1, RGS2, RGS4, RGS19 and ADRA1B, ADRA2A, ADRA2B, ADRA2C, CDKN2A, PPP1R2, RASGFR1 and TIAM1. Interacts (via C-terminus) with SPATA13 (via C-terminal tail). Interacts with ADRA2B. In terms of processing, stimulation of D1 (but not D2) dopamine receptors induces Ser-94 phosphorylation. Dephosphorylation of Ser-94 is mediated mainly by PP1 and to a lesser extent by PP2A. Phosphorylation of spinophilin disrupts its association with F-actin, but does not affect its binding to PP1.

The protein localises to the cytoplasm. Its subcellular location is the cytoskeleton. It is found in the nucleus. The protein resides in the cell projection. It localises to the dendritic spine. The protein localises to the postsynaptic density. Its subcellular location is the synapse. It is found in the cell junction. The protein resides in the adherens junction. It localises to the cell membrane. The protein localises to the lamellipodium. Its subcellular location is the filopodium. It is found in the ruffle membrane. In terms of biological role, seems to act as a scaffold protein in multiple signaling pathways. Modulates excitatory synaptic transmission and dendritic spine morphology. Binds to actin filaments (F-actin) and shows cross-linking activity. Binds along the sides of the F-actin. May play an important role in linking the actin cytoskeleton to the plasma membrane at the synaptic junction. Believed to target protein phosphatase 1/PP1 to dendritic spines, which are rich in F-actin, and regulates its specificity toward ion channels and other substrates, such as AMPA-type and NMDA-type glutamate receptors. Plays a role in regulation of G-protein coupled receptor signaling, including dopamine D2 receptors and alpha-adrenergic receptors. May establish a signaling complex for dopaminergic neurotransmission through D2 receptors by linking receptors downstream signaling molecules and the actin cytoskeleton. Binds to ADRA1B and RGS2 and mediates regulation of ADRA1B signaling. May confer to Rac signaling specificity by binding to both, RacGEFs and Rac effector proteins. Probably regulates p70 S6 kinase activity by forming a complex with TIAM1. Required for hepatocyte growth factor (HGF)-induced cell migration. The sequence is that of Neurabin-2 (PPP1R9B) from Homo sapiens (Human).